Consider the following 955-residue polypeptide: 2-oxoglutarate dehydrogenase E1 component (955 aa).

The protein belongs to the alpha-ketoglutarate dehydrogenase family. Homodimer. Part of the 2-oxoglutarate dehydrogenase (OGDH) complex composed of E1 (2-oxoglutarate dehydrogenase), E2 (dihydrolipoamide succinyltransferase) and E3 (dihydrolipoamide dehydrogenase); the complex contains multiple copies of the three enzymatic components (E1, E2 and E3). It depends on thiamine diphosphate as a cofactor.

The catalysed reaction is N(6)-[(R)-lipoyl]-L-lysyl-[protein] + 2-oxoglutarate + H(+) = N(6)-[(R)-S(8)-succinyldihydrolipoyl]-L-lysyl-[protein] + CO2. Functionally, E1 component of the 2-oxoglutarate dehydrogenase (OGDH) complex which catalyzes the decarboxylation of 2-oxoglutarate, the first step in the conversion of 2-oxoglutarate to succinyl-CoA and CO(2). The protein is 2-oxoglutarate dehydrogenase E1 component of Bacillus cereus (strain ATCC 14579 / DSM 31 / CCUG 7414 / JCM 2152 / NBRC 15305 / NCIMB 9373 / NCTC 2599 / NRRL B-3711).